Consider the following 439-residue polypeptide: 3-phosphoshikimate 1-carboxyvinyltransferase (439 aa).

3-phosphoshikimate is bound by residues lysine 25, serine 26, and arginine 30. Lysine 25 is a phosphoenolpyruvate binding site. Residues glycine 96 and arginine 124 each contribute to the phosphoenolpyruvate site. 6 residues coordinate 3-phosphoshikimate: serine 170, serine 171, glutamine 172, serine 202, aspartate 324, and lysine 351. A phosphoenolpyruvate-binding site is contributed by glutamine 172. Aspartate 324 acts as the Proton acceptor in catalysis. Residues arginine 355, arginine 399, and lysine 424 each coordinate phosphoenolpyruvate.

It belongs to the EPSP synthase family. Monomer.

The protein localises to the cytoplasm. The catalysed reaction is 3-phosphoshikimate + phosphoenolpyruvate = 5-O-(1-carboxyvinyl)-3-phosphoshikimate + phosphate. The protein operates within metabolic intermediate biosynthesis; chorismate biosynthesis; chorismate from D-erythrose 4-phosphate and phosphoenolpyruvate: step 6/7. Catalyzes the transfer of the enolpyruvyl moiety of phosphoenolpyruvate (PEP) to the 5-hydroxyl of shikimate-3-phosphate (S3P) to produce enolpyruvyl shikimate-3-phosphate and inorganic phosphate. The protein is 3-phosphoshikimate 1-carboxyvinyltransferase of Bordetella avium (strain 197N).